The chain runs to 268 residues: Type III pantothenate kinase (268 aa).

ATP is bound at residue 18-25; sequence DIGNTTTT. Residues Y108 and 115–118 contribute to the substrate site; that span reads GADR. D117 (proton acceptor) is an active-site residue. D138 contributes to the K(+) binding site. Position 141 (T141) interacts with ATP. Residue T193 participates in substrate binding.

Belongs to the type III pantothenate kinase family. As to quaternary structure, homodimer. The cofactor is NH4(+). Requires K(+) as cofactor.

The protein resides in the cytoplasm. The catalysed reaction is (R)-pantothenate + ATP = (R)-4'-phosphopantothenate + ADP + H(+). It participates in cofactor biosynthesis; coenzyme A biosynthesis; CoA from (R)-pantothenate: step 1/5. Functionally, catalyzes the phosphorylation of pantothenate (Pan), the first step in CoA biosynthesis. The sequence is that of Type III pantothenate kinase from Chlorobaculum parvum (strain DSM 263 / NCIMB 8327) (Chlorobium vibrioforme subsp. thiosulfatophilum).